A 586-amino-acid polypeptide reads, in one-letter code: MLRQCARWVLTRTRFGRGCRRYGSCSPSASGDAGEARAYFTTPIFYVNAAPHIGHLYSALLADALCRHRRLRVPGSASTRFSTGTDEHGLKIQQAAATAGLAPIELCDRVSAQFLQLFREADISSTDFIRTTEARHRVAVQHFWGVLEARGLLYKGIYEGWYCASDECFLPEAKVTRQVGPSGDPCPVSLESGHPVSWTKEENYIFKLSQFREPLQRWLGNNPQAITPEPFHQAVLQWLEEELPDLSVSRRSSHLHWGIPVPGDDSQTIYVWLDALVNYLTVVGYPDADFKSWWPATSHIIGKDILKFHAIYWPALLLGAGLRPPHRIYVHSHWTVSGQKMSKSLGNVVDPRTCLDRYTVDGFRYFLLRQGVPNWDCDYYDEKVVKLLDSELADALGGLLNRCTAYRINPSGTYPSFCAACFPSEPGLTGPSVRVQAEDYALVTAVATLPKLVAGYYNDFQIYKALEAVSSCVRQTNGFVQRHAPWKLNWESPEDAPWLGTVLHVALECLRVFGTLLQPVTPNLADKLLSRLGVSTTERGLGELYFLPRFYGHPCPFEGRKLGPDTGLLFPRLDQSRTRLVKAHRT.

The transit peptide at 1–46 (MLRQCARWVLTRTRFGRGCRRYGSCSPSASGDAGEARAYFTTPIFY) directs the protein to the mitochondrion. Residues 45–55 (FYVNAAPHIGH) carry the 'HIGH' region motif. The 'KMSKS' region motif lies at 340-344 (KMSKS). Lys343 is a binding site for ATP.

Belongs to the class-I aminoacyl-tRNA synthetase family.

It is found in the mitochondrion matrix. It catalyses the reaction tRNA(Met) + L-methionine + ATP = L-methionyl-tRNA(Met) + AMP + diphosphate. The polypeptide is Methionine--tRNA ligase, mitochondrial (Mars2) (Mus musculus (Mouse)).